The sequence spans 1404 residues: DNA-directed RNA polymerase subunit beta' (1404 aa).

Cysteine 72, cysteine 74, cysteine 87, and cysteine 90 together coordinate Zn(2+). Mg(2+) is bound by residues aspartate 463, aspartate 465, and aspartate 467. 4 residues coordinate Zn(2+): cysteine 811, cysteine 885, cysteine 892, and cysteine 895.

It belongs to the RNA polymerase beta' chain family. As to quaternary structure, the RNAP catalytic core consists of 2 alpha, 1 beta, 1 beta' and 1 omega subunit. When a sigma factor is associated with the core the holoenzyme is formed, which can initiate transcription. The cofactor is Mg(2+). Requires Zn(2+) as cofactor.

The enzyme catalyses RNA(n) + a ribonucleoside 5'-triphosphate = RNA(n+1) + diphosphate. Its function is as follows. DNA-dependent RNA polymerase catalyzes the transcription of DNA into RNA using the four ribonucleoside triphosphates as substrates. This chain is DNA-directed RNA polymerase subunit beta', found in Jannaschia sp. (strain CCS1).